Here is a 313-residue protein sequence, read N- to C-terminus: MIEKYKNILITFIALAAIVFLVGCSNKKTDQVTDKKINVVVTNSILADITKNIADDKINLHSIVPVGKDPHEYEPLPVDVQKTSKADLIFYNGLNLETGGNAWFTKLVNNANKKENIDYFPVSTGVEVIYLEGKNTEGKEDPHAWLNLENGIIYAKNIEQQLSKKDPVNKDFYKHNLDKYVKKLSDLDQQAKSKFSLIPENEKMIVTSEGCFKYFSKAYNIPSAYIWEINTEEEGTPDQIKNLVRKLRATELKSLFVESSVDNRPMKTVSKDTGIPIYSTIFTDSVAKKGENGDSYYSMMKWNLDQIYKGLAK.

Positions 1-23 (MIEKYKNILITFIALAAIVFLVG) are cleaved as a signal peptide. The N-palmitoyl cysteine moiety is linked to residue Cys24. Cys24 carries S-diacylglycerol cysteine lipidation. Zn(2+)-binding residues include His71, His143, Glu209, and Asp284.

This sequence belongs to the bacterial solute-binding protein 9 family. Lipoprotein receptor antigen (Lrai) subfamily.

The protein localises to the cell membrane. Part of an ATP-driven transport system for a metal; probably for manganese. This chain is Metal ABC transporter substrate-binding lipoprotein (mtsA), found in Lactococcus lactis subsp. lactis (strain IL1403) (Streptococcus lactis).